The sequence spans 196 residues: Pycsar effector protein GmPycTM (196 aa).

Helical transmembrane passes span 34–54 (ISFS…SGII), 82–102 (ITTI…TYLF), and 176–196 (VNWL…FLFL).

It is found in the cell inner membrane. Its function is as follows. Pycsar (pyrimidine cyclase system for antiphage resistance) provides immunity against bacteriophage. The pyrimidine cyclase (PycC) synthesizes cyclic nucleotides in response to infection; these serve as specific second messenger signals. The signals activate the adjacent effector, leading to bacterial cell death and abortive phage infection. A clade C Pycsar system. Functionally, the effector gene of a two-gene Pycsar system. Expression of this and adjacent uridylate cyclase GmPycC (AC P0DV42) probably confers resistance to bacteriophage. The genes are probably only expressed in response to bacteriophage infection. Probably only responds to cUMP (produced by its cognate NTP cyclase), acts by impairing membrane integrity. This is Pycsar effector protein GmPycTM from Gulbenkiania mobilis.